A 468-amino-acid chain; its full sequence is Microtubule-associated tyrosine carboxypeptidase 1 (468 aa).

Positions 1 to 10 are enriched in polar residues; sequence MVLDSGTQVY. Disordered regions lie at residues 1–39 and 77–112; these read MVLD…PPLY and MKRS…TLRP. Histidine 277 is a Zn(2+) binding site. The Nucleophile role is filled by glutamate 278. The Zn(2+) site is built by histidine 282 and glutamate 313.

The protein belongs to the peptidase MATCAP family. Requires Zn(2+) as cofactor.

The protein localises to the cytoplasm. The protein resides in the cytoskeleton. It catalyses the reaction C-terminal L-alpha-aminoacyl-L-glutamyl-L-glutamyl-L-tyrosyl-[tubulin] + H2O = C-terminal L-alpha-aminoacyl-L-glutamyl-L-glutamyl-[tubulin] + L-tyrosine. It carries out the reaction C-terminal L-alpha-aminoacyl-L-glutamyl-L-glutamyl-L-phenylalanyl-[tubulin] + H2O = C-terminal L-alpha-aminoacyl-L-glutamyl-L-glutamyl-[tubulin] + L-phenylalanine. Its function is as follows. Tyrosine carboxypeptidase that removes the C-terminal tyrosine residue of alpha-tubulin, thereby regulating microtubule dynamics and function. Also able to remove the C-terminal phenylalanine residue of alpha-tubulin TUBA8. Recognizes adjacent tubulin dimers along the same protofilament. The chain is Microtubule-associated tyrosine carboxypeptidase 1 from Rattus norvegicus (Rat).